The sequence spans 87 residues: Cell division topological specificity factor (87 aa).

Belongs to the MinE family.

Prevents the cell division inhibition by proteins MinC and MinD at internal division sites while permitting inhibition at polar sites. This ensures cell division at the proper site by restricting the formation of a division septum at the midpoint of the long axis of the cell. The chain is Cell division topological specificity factor from Vibrio parahaemolyticus serotype O3:K6 (strain RIMD 2210633).